We begin with the raw amino-acid sequence, 521 residues long: Protein nucleotidyltransferase YdiU (521 aa).

The ATP site is built by glycine 109, glycine 111, arginine 112, lysine 131, aspartate 143, glycine 144, arginine 194, and arginine 201. Aspartate 270 serves as the catalytic Proton acceptor. Residues asparagine 271 and aspartate 280 each coordinate Mg(2+). Position 280 (aspartate 280) interacts with ATP.

Belongs to the SELO family. It depends on Mg(2+) as a cofactor. Requires Mn(2+) as cofactor.

The catalysed reaction is L-seryl-[protein] + ATP = 3-O-(5'-adenylyl)-L-seryl-[protein] + diphosphate. The enzyme catalyses L-threonyl-[protein] + ATP = 3-O-(5'-adenylyl)-L-threonyl-[protein] + diphosphate. It catalyses the reaction L-tyrosyl-[protein] + ATP = O-(5'-adenylyl)-L-tyrosyl-[protein] + diphosphate. It carries out the reaction L-histidyl-[protein] + UTP = N(tele)-(5'-uridylyl)-L-histidyl-[protein] + diphosphate. The catalysed reaction is L-seryl-[protein] + UTP = O-(5'-uridylyl)-L-seryl-[protein] + diphosphate. The enzyme catalyses L-tyrosyl-[protein] + UTP = O-(5'-uridylyl)-L-tyrosyl-[protein] + diphosphate. Functionally, nucleotidyltransferase involved in the post-translational modification of proteins. It can catalyze the addition of adenosine monophosphate (AMP) or uridine monophosphate (UMP) to a protein, resulting in modifications known as AMPylation and UMPylation. The chain is Protein nucleotidyltransferase YdiU from Burkholderia pseudomallei (strain K96243).